Reading from the N-terminus, the 447-residue chain is Elongation factor 1-alpha (447 aa).

The region spanning 5 to 230 is the tr-type G domain; it reads KFHINIVVIG…DQINDAKRPS (226 aa). Positions 14-21 are G1; the sequence is GHVDSGKS. A GTP-binding site is contributed by 14 to 21; that stretch reads GHVDSGKS. Lys55 is modified (N6,N6-dimethyllysine). A G2 region spans residues 70-74; sequence GITID. Residue Lys79 is modified to N6,N6,N6-trimethyllysine. The interval 91-94 is G3; sequence DAPG. GTP contacts are provided by residues 91–95 and 153–156; these read DAPGH and NKMD. Residues 153 to 156 are G4; that stretch reads NKMD. Lys187 carries the post-translational modification N6,N6,N6-trimethyllysine. The interval 194-196 is G5; sequence SGF. Position 261 is an N6-methyllysine (Lys261). Glu289 carries the 5-glutamyl glycerylphosphorylethanolamine modification. Lys306 carries the post-translational modification N6,N6,N6-trimethyllysine. Position 362 is a 5-glutamyl glycerylphosphorylethanolamine (Glu362). Residue Lys396 is modified to N6,N6,N6-trimethyllysine.

Belongs to the TRAFAC class translation factor GTPase superfamily. Classic translation factor GTPase family. EF-Tu/EF-1A subfamily. In terms of tissue distribution, was detected in all tissues examined but was most abundant in roots and salt-adapted cultured cells.

The protein resides in the cytoplasm. In terms of biological role, this protein promotes the GTP-dependent binding of aminoacyl-tRNA to the A-site of ribosomes during protein biosynthesis. The sequence is that of Elongation factor 1-alpha from Nicotiana tabacum (Common tobacco).